A 275-amino-acid chain; its full sequence is Aldo-keto reductase MSMEG_2408/MSMEI_2347 (275 aa).

Residue Tyr-49 is the Proton donor of the active site. The NADPH site is built by Leu-189, Ile-227, Lys-229, Ser-230, Val-231, Arg-235, Ser-238, and Asn-239. Residue Lys-262 forms an Isoglutamyl lysine isopeptide (Lys-Gln) (interchain with Q-Cter in protein Pup) linkage.

This sequence belongs to the aldo/keto reductase family.

This chain is Aldo-keto reductase MSMEG_2408/MSMEI_2347, found in Mycolicibacterium smegmatis (strain ATCC 700084 / mc(2)155) (Mycobacterium smegmatis).